The chain runs to 160 residues: Transcription antitermination protein NusB (160 aa).

The protein belongs to the NusB family.

In terms of biological role, involved in transcription antitermination. Required for transcription of ribosomal RNA (rRNA) genes. Binds specifically to the boxA antiterminator sequence of the ribosomal RNA (rrn) operons. The protein is Transcription antitermination protein NusB of Nitrobacter hamburgensis (strain DSM 10229 / NCIMB 13809 / X14).